A 205-amino-acid polypeptide reads, in one-letter code: Small ribosomal subunit protein uS2 (205 aa).

Belongs to the universal ribosomal protein uS2 family.

The polypeptide is Small ribosomal subunit protein uS2 (rps2) (Aeropyrum pernix (strain ATCC 700893 / DSM 11879 / JCM 9820 / NBRC 100138 / K1)).